The following is a 216-amino-acid chain: Ribosome maturation factor RimP (216 aa).

It belongs to the RimP family.

The protein localises to the cytoplasm. Required for maturation of 30S ribosomal subunits. The chain is Ribosome maturation factor RimP from Bartonella quintana (strain Toulouse) (Rochalimaea quintana).